The primary structure comprises 379 residues: Homoserine O-acetyltransferase (379 aa).

In terms of domain architecture, AB hydrolase-1 spans 52 to 356 (NVVVVLHALT…VYGHDGFLVE (305 aa)). Residue serine 157 is the Nucleophile of the active site. Arginine 227 contributes to the substrate binding site. Active-site residues include aspartate 320 and histidine 350. Residue aspartate 351 participates in substrate binding.

The protein belongs to the AB hydrolase superfamily. MetX family. In terms of assembly, homodimer.

It localises to the cytoplasm. The catalysed reaction is L-homoserine + acetyl-CoA = O-acetyl-L-homoserine + CoA. Its pathway is amino-acid biosynthesis; L-methionine biosynthesis via de novo pathway; O-acetyl-L-homoserine from L-homoserine: step 1/1. Its function is as follows. Transfers an acetyl group from acetyl-CoA to L-homoserine, forming acetyl-L-homoserine. The polypeptide is Homoserine O-acetyltransferase (Mycobacterium bovis (strain ATCC BAA-935 / AF2122/97)).